The chain runs to 156 residues: tRNA-specific adenosine deaminase (156 aa).

The 119-residue stretch at 2 to 120 folds into the CMP/dCMP-type deaminase domain; it reads TNDIYFMTLA…GSLMNLLQQS (119 aa). Zn(2+) is bound at residue H53. The active-site Proton donor is E55. Zn(2+) contacts are provided by C83 and C86.

The protein belongs to the cytidine and deoxycytidylate deaminase family. As to quaternary structure, homodimer. Zn(2+) serves as cofactor.

The catalysed reaction is adenosine(34) in tRNA + H2O + H(+) = inosine(34) in tRNA + NH4(+). Functionally, catalyzes the deamination of adenosine to inosine at the wobble position 34 of tRNA(Arg2). In Staphylococcus aureus (strain Mu50 / ATCC 700699), this protein is tRNA-specific adenosine deaminase.